Consider the following 176-residue polypeptide: Ferritin, spleen middle subunit (176 aa).

One can recognise a Ferritin-like diiron domain in the interval 7–156 (QNYHRDCEAA…DFITNLSRMD (150 aa)). Fe cation-binding residues include glutamate 24, glutamate 59, histidine 62, glutamate 104, and glutamine 138.

Belongs to the ferritin family. In terms of assembly, in spleen, forms a homomer. The functional molecule forms a roughly spherical shell with a diameter of 12 nm and contains a central cavity into which the insoluble mineral iron core is deposited. As to expression, spleen (at protein level).

The catalysed reaction is 4 Fe(2+) + O2 + 4 H(+) = 4 Fe(3+) + 2 H2O. Its function is as follows. Stores iron in a soluble, non-toxic, readily available form. Important for iron homeostasis. Has ferroxidase activity. Iron is taken up in the ferrous form and deposited as ferric hydroxides after oxidation. This is Ferritin, spleen middle subunit from Trematomus bernacchii (Emerald rockcod).